A 330-amino-acid polypeptide reads, in one-letter code: Ribosomal RNA small subunit methyltransferase C (330 aa).

This sequence belongs to the methyltransferase superfamily. RsmC family. In terms of assembly, monomer.

The protein localises to the cytoplasm. It catalyses the reaction guanosine(1207) in 16S rRNA + S-adenosyl-L-methionine = N(2)-methylguanosine(1207) in 16S rRNA + S-adenosyl-L-homocysteine + H(+). Functionally, specifically methylates the guanine in position 1207 of 16S rRNA in the 30S particle. The sequence is that of Ribosomal RNA small subunit methyltransferase C from Haemophilus influenzae (strain 86-028NP).